The primary structure comprises 218 residues: YlmG homolog protein 1-2, chloroplastic (218 aa).

The N-terminal 83 residues, M1–L83, are a transit peptide targeting the chloroplast. A run of 2 helical transmembrane segments spans residues L133–V153 and I187–G207.

Belongs to the YggT family.

The protein resides in the plastid. It localises to the chloroplast thylakoid membrane. Functionally, not required for the biogenesis and accumulation of native cytochrome b6 in the thylakoid membrane. Not functionally involved in the pathway for covalent binding of the c-type heme to cytochrome b6. The polypeptide is YlmG homolog protein 1-2, chloroplastic (Arabidopsis thaliana (Mouse-ear cress)).